The sequence spans 359 residues: MSIVLAIDTATAAVTAGIVAFDGHDCFTLAERVTVDAKAHVERLTPNVLVALADAELAMCELDAVVVGCGPGPFTGLRVGMATAAAYGHALGIPVHGVCSLDAIGVRTTGDTLVVTDARRHEVYWARYRDGVRIAGPAVGSPTDVDPGTALTVAGSPEHAALFGLPLCEPIYPTPAGLVAAVPDWSVSPIPLVALYLRRPDAKPITADNEPIVIGTLTPADVDRCAQLESQFFDGDNPWPAAAFDRELANSYNCYVGARTADTLVGYAGITRLGHTPPFEYEVHTIAVDPAYRGRGVGRRLLGELLDFAGSGAIYLEVRTDNETAIALYRSVGFERIGLRPRYYPASGADAYLMRREAQ.

An N-terminal signal peptide occupies residues 1 to 15; sequence MSIVLAIDTATAAVT. The 148-residue stretch at 212 to 359 folds into the N-acetyltransferase domain; sequence IVIGTLTPAD…DAYLMRREAQ (148 aa).

This is an uncharacterized protein from Mycobacterium leprae (strain TN).